Reading from the N-terminus, the 604-residue chain is Baculoviral IAP repeat-containing protein 3 (604 aa).

BIR repeat units follow at residues 29–96 (ELYR…CRFV), 169–235 (ENAR…CPFI), and 255–322 (HAAR…CEYL). The Zn(2+) site is built by cysteine 292, cysteine 295, histidine 312, and cysteine 319. Residues 439 to 529 (KESNDLLLIR…VLYEHLFVQQ (91 aa)) enclose the CARD domain. An RING-type zinc finger spans residues 557-592 (CKVCMDKEVSIVFIPCGHLVVCKDCAPSLRKCPICR).

The protein belongs to the IAP family. In terms of assembly, interacts with PRSS25; interaction inhibits apoptotic suppressor activity. The BIR motifs region interacts with TNF receptor associated factors 1 and 2 (TRAF1 and TRAF2) to form a heteromeric complex, which is then recruited to the tumor necrosis factor receptor 2 (TNFR2). Interaction with TRAF2 is required for ubiquitination of IKBKE, degradation of NFKBIA and activation of NF-kappa-B. Interacts with RIP1, RIP2, RIP3, RIP4 and USP19. Post-translationally, auto-ubiquitinated and degraded by the proteasome in apoptotic cells. Highly expressed in fetal lung, and kidney. In the adult, expression is mainly seen in lymphoid tissues, including spleen, thymus and peripheral blood lymphocytes.

It localises to the cytoplasm. The protein localises to the nucleus. The catalysed reaction is S-ubiquitinyl-[E2 ubiquitin-conjugating enzyme]-L-cysteine + [acceptor protein]-L-lysine = [E2 ubiquitin-conjugating enzyme]-L-cysteine + N(6)-ubiquitinyl-[acceptor protein]-L-lysine.. USP19 regulates the stability of BIRC3/c-IAP2 by preventing its ubiquitination. Multi-functional protein which regulates not only caspases and apoptosis, but also modulates inflammatory signaling and immunity, mitogenic kinase signaling and cell proliferation, as well as cell invasion and metastasis. Acts as an E3 ubiquitin-protein ligase regulating NF-kappa-B signaling and regulates both canonical and non-canonical NF-kappa-B signaling by acting in opposite directions: acts as a positive regulator of the canonical pathway and suppresses constitutive activation of non-canonical NF-kappa-B signaling. The target proteins for its E3 ubiquitin-protein ligase activity include: RIPK1, RIPK2, RIPK3, RIPK4, CASP3, CASP7, CASP8, IKBKE, TRAF1, and BCL10. Acts as an important regulator of innate immune signaling via regulation of Toll-like receptors (TLRs), Nodlike receptors (NLRs) and RIG-I like receptors (RLRs), collectively referred to as pattern recognition receptors (PRRs). Protects cells from spontaneous formation of the ripoptosome, a large multi-protein complex that has the capability to kill cancer cells in a caspase-dependent and caspase-independent manner. Suppresses ripoptosome formation by ubiquitinating RIPK1 and CASP8. This Homo sapiens (Human) protein is Baculoviral IAP repeat-containing protein 3 (BIRC3).